A 227-amino-acid chain; its full sequence is Sensory transduction protein RegX3 (227 aa).

The 114-residue stretch at 3-116 (SVLIVEDEES…ELIARIRAVL (114 aa)) folds into the Response regulatory domain. Residue D52 is modified to 4-aspartylphosphate. The ompR/PhoB-type DNA-binding region spans 128–227 (DGVLESGPVR…VRGLGYKLEG (100 aa)).

Phosphorylated by SenX3.

In terms of biological role, member of the two-component regulatory system SenX3/RegX3. Specifically binds to the promoter region of the senX3-regX3 operon. This Mycobacterium bovis (strain ATCC BAA-935 / AF2122/97) protein is Sensory transduction protein RegX3.